The following is a 391-amino-acid chain: Transforming growth factor beta-1 proprotein (391 aa).

Residues 1-18 form the signal peptide; sequence MDPSPLLALLLLLGAARA. The tract at residues 19-63 is straightjacket domain; it reads LSTCQRLDLEAAKKKRIEAVRGQILSKLRLTAPPPASETPPRPLP. Residues 64-270 are arm domain; sequence DDVRALYNST…ALPAERANEL (207 aa). 3 N-linked (GlcNAc...) asparagine glycosylation sites follow: N71, N126, and N171. The tract at residues 221–249 is bowtie tail; it reads EMGPGHADEMRISIEGFEQQRGDMQSIAK. Positions 241-243 match the Cell attachment site motif; it reads RGD. 4 disulfide bridges follow: C284/C295, C294/C357, C323/C388, and C327/C390.

Belongs to the TGF-beta family. As to quaternary structure, latency-associated peptide: Homodimer; disulfide-linked. Latency-associated peptide: Interacts with Transforming growth factor beta-1 (TGF-beta-1) chain; interaction is non-covalent and maintains (TGF-beta-1) in a latent state; each Latency-associated peptide (LAP) monomer interacts with TGF-beta-1 in the other monomer. Transforming growth factor beta-1: Homodimer; disulfide-linked. Transforming growth factor beta-1: Interacts with TGF-beta receptors (TGFBR1 and TGFBR2), leading to signal transduction. In terms of processing, transforming growth factor beta-1 proprotein: The precursor proprotein is cleaved in the Golgi apparatus to form Transforming growth factor beta-1 (TGF-beta-1) and Latency-associated peptide (LAP) chains, which remain non-covalently linked, rendering TGF-beta-1 inactive.

It is found in the secreted. The protein localises to the extracellular space. The protein resides in the extracellular matrix. Functionally, transforming growth factor beta-1 proprotein: Precursor of the Latency-associated peptide (LAP) and Transforming growth factor beta-1 (TGF-beta-1) chains, which constitute the regulatory and active subunit of TGF-beta-1, respectively. Required to maintain the Transforming growth factor beta-1 (TGF-beta-1) chain in a latent state during storage in extracellular matrix. Associates non-covalently with TGF-beta-1 and regulates its activation via interaction with 'milieu molecules', such as LTBP1, LRRC32/GARP and LRRC33/NRROS, that control activation of TGF-beta-1. Interaction with integrins (ITGAV:ITGB6 or ITGAV:ITGB8) results in distortion of the Latency-associated peptide chain and subsequent release of the active TGF-beta-1. Its function is as follows. Transforming growth factor beta-1: Multifunctional protein that regulates the growth and differentiation of various cell types and is involved in various processes, such as normal development, immune function, microglia function and responses to neurodegeneration. Activation into mature form follows different steps: following cleavage of the proprotein in the Golgi apparatus, Latency-associated peptide (LAP) and Transforming growth factor beta-1 (TGF-beta-1) chains remain non-covalently linked rendering TGF-beta-1 inactive during storage in extracellular matrix. At the same time, LAP chain interacts with 'milieu molecules', such as LTBP1, LRRC32/GARP and LRRC33/NRROS that control activation of TGF-beta-1 and maintain it in a latent state during storage in extracellular milieus. TGF-beta-1 is released from LAP by integrins (ITGAV:ITGB6 or ITGAV:ITGB8): integrin-binding to LAP stabilizes an alternative conformation of the LAP bowtie tail and results in distortion of the LAP chain and subsequent release of the active TGF-beta-1. Once activated following release of LAP, TGF-beta-1 acts by binding to TGF-beta receptors (TGFBR1 and TGFBR2), which transduce signal. While expressed by many cells types, TGF-beta-1 only has a very localized range of action within cell environment thanks to fine regulation of its activation by Latency-associated peptide chain (LAP) and 'milieu molecules'. Plays an important role in bone remodeling: acts as a potent stimulator of osteoblastic bone formation. Can promote either T-helper 17 cells (Th17) or regulatory T-cells (Treg) lineage differentiation in a concentration-dependent manner. Can induce epithelial-to-mesenchymal transition (EMT) and cell migration in various cell types. This chain is Transforming growth factor beta-1 proprotein (TGFB1), found in Gallus gallus (Chicken).